The sequence spans 1184 residues: DNA-directed RNA polymerase subunit beta (1184 aa).

It belongs to the RNA polymerase beta chain family. As to quaternary structure, the RNAP catalytic core consists of 2 alpha, 1 beta, 1 beta' and 1 omega subunit. When a sigma factor is associated with the core the holoenzyme is formed, which can initiate transcription.

The enzyme catalyses RNA(n) + a ribonucleoside 5'-triphosphate = RNA(n+1) + diphosphate. Its function is as follows. DNA-dependent RNA polymerase catalyzes the transcription of DNA into RNA using the four ribonucleoside triphosphates as substrates. In Fusobacterium nucleatum subsp. nucleatum (strain ATCC 25586 / DSM 15643 / BCRC 10681 / CIP 101130 / JCM 8532 / KCTC 2640 / LMG 13131 / VPI 4355), this protein is DNA-directed RNA polymerase subunit beta.